The primary structure comprises 86 residues: Acyl carrier protein (86 aa).

In terms of domain architecture, Carrier spans 10 to 85 (DKIEQKVIEM…DVIQYIKERQ (76 aa)). Residue serine 45 is modified to O-(pantetheine 4'-phosphoryl)serine.

The protein belongs to the acyl carrier protein (ACP) family. In terms of processing, 4'-phosphopantetheine is transferred from CoA to a specific serine of apo-ACP by AcpS. This modification is essential for activity because fatty acids are bound in thioester linkage to the sulfhydryl of the prosthetic group.

It is found in the cytoplasm. The protein operates within lipid metabolism; fatty acid biosynthesis. Carrier of the growing fatty acid chain in fatty acid biosynthesis. The protein is Acyl carrier protein of Rickettsia canadensis (strain McKiel).